A 110-amino-acid chain; its full sequence is Large ribosomal subunit protein uL22 (110 aa).

It belongs to the universal ribosomal protein uL22 family. As to quaternary structure, part of the 50S ribosomal subunit.

Functionally, this protein binds specifically to 23S rRNA; its binding is stimulated by other ribosomal proteins, e.g. L4, L17, and L20. It is important during the early stages of 50S assembly. It makes multiple contacts with different domains of the 23S rRNA in the assembled 50S subunit and ribosome. Its function is as follows. The globular domain of the protein is located near the polypeptide exit tunnel on the outside of the subunit, while an extended beta-hairpin is found that lines the wall of the exit tunnel in the center of the 70S ribosome. The polypeptide is Large ribosomal subunit protein uL22 (Salmonella arizonae (strain ATCC BAA-731 / CDC346-86 / RSK2980)).